We begin with the raw amino-acid sequence, 276 residues long: Secretagogin (276 aa).

6 consecutive EF-hand domains span residues 12 to 47, 58 to 93, 105 to 140, 149 to 184, 197 to 232, and 240 to 276; these read LDAACFWQIWQRFDKEEKGYIRETELDAFFDHLLAK, NVQKVKEQLMTSHNVSKEGRILMKELASMFLSEDEN, DNSVEFMQIWRKYDADSSGFISAAELCNFLRDLFLH, ELEEYTSTMMKIFDKNKDGRLDLNDLARILALQENF, ERKRDFEKIFAHYDVSKTGALEGPEVDGFVKDMMEL, and VDLDKFREILLRHCDVNKDGKIQKSELALCLGLKINP. Residues Asp-25, Tyr-31, Glu-36, Ser-73, Glu-75, Arg-77, Glu-82, Asp-118, Asp-120, Ser-122, Glu-129, Asp-162, Asn-164, Asp-166, Arg-168, Asp-173, Asp-210, Ser-212, Thr-214, Glu-221, Asp-254, Asn-256, Asp-258, Lys-260, and Glu-265 each contribute to the Ca(2+) site.

It localises to the cytoplasm. It is found in the secreted. The protein localises to the cytoplasmic vesicle. The protein resides in the secretory vesicle membrane. This is Secretagogin (Scgn) from Mus musculus (Mouse).